The primary structure comprises 589 residues: tRNA (guanine(26)-N(2))-dimethyltransferase 2 (589 aa).

The region spanning 9 to 465 is the Trm1 methyltransferase domain; the sequence is TVIKEGEAEI…APMEVIWDIM (457 aa). Arginine 36 contributes to the S-adenosyl-L-methionine binding site. Residues 51 to 122 form a disordered region; that stretch reads KQEHEAKSSK…RFAPREPKPP (72 aa). 2 stretches are compositionally biased toward basic and acidic residues: residues 68–81 and 106–122; these read VIEKDASEASKEET and DPAKTTERFAPREPKPP. The S-adenosyl-L-methionine site is built by arginine 134, aspartate 152, and valine 185. Residues cysteine 315, cysteine 318, cysteine 350, and cysteine 353 each coordinate Zn(2+). The tract at residues 550–589 is disordered; that stretch reads LSQHHEELKEEDEEAEPEDNVQDKVDPKRQKTATDNITST. Over residues 558-569 the composition is skewed to acidic residues; that stretch reads KEEDEEAEPEDN.

This sequence belongs to the class I-like SAM-binding methyltransferase superfamily. Trm1 family.

It catalyses the reaction guanosine(26) in tRNA + 2 S-adenosyl-L-methionine = N(2)-dimethylguanosine(26) in tRNA + 2 S-adenosyl-L-homocysteine + 2 H(+). In terms of biological role, dimethylates a single guanine residue at position 26 of most tRNAs using S-adenosyl-L-methionine as donor of the methyl groups. This chain is tRNA (guanine(26)-N(2))-dimethyltransferase 2, found in Arabidopsis thaliana (Mouse-ear cress).